Here is a 491-residue protein sequence, read N- to C-terminus: MADPSLNDNPTACPHCASSQAGLLCVCPAGKSPVLVVEMSQTSSIGSTEFFASQERKKERNTSRESSLKDLSIRTSNVERKPQAQWSRSNVTVGKIPHIRMDDGAGIEEFYTFGRILGQGSFGMVFEAIDKETGAKWAIKKVNKEKAGSSAMKLLEREVSILKTVNHQHIIHLEQVFESPQKMYLVMELCEDGELKAVMDQRGHFSENETRLIIQSLASAIAYLHNKDIVHRDLKLENIMVKSSFIDDNNEMNLNIKVTDFGLSVQKHGSRSEGMMQTTCGTPIYMAPEVINAHDYSQQCDIWSIGVIMFILLCGEPPFLANSEEKLYELIKKGELRFENPVWESVSDSAKNTLKQLMKVDPAHRITAKELLDNQWLTGNTLSSARPTNVLEMMKEWKNNPESDEETNTDEETEQSAVYSPSANTAKQPTNAAKKPAAESVGMTSSNSSSSKLLSAESKAEPEKSSETVGHASVAKTTLKSTTLFRGKKRL.

The tract at residues 51–89 (FASQERKKERNTSRESSLKDLSIRTSNVERKPQAQWSRS) is disordered. Positions 54–82 (QERKKERNTSRESSLKDLSIRTSNVERKP) are enriched in basic and acidic residues. Residues 111 to 377 (YTFGRILGQG…AKELLDNQWL (267 aa)) enclose the Protein kinase domain. ATP contacts are provided by residues 117–125 (LGQGSFGMV) and K140. Residue D233 is the Proton acceptor of the active site. The interval 398 to 491 (KNNPESDEET…TTLFRGKKRL (94 aa)) is disordered. The span at 402 to 414 (ESDEETNTDEETE) shows a compositional bias: acidic residues. S403 is subject to Phosphoserine. Positions 415 to 431 (QSAVYSPSANTAKQPTN) are enriched in polar residues. Over residues 445-457 (SSNSSSSKLLSAE) the composition is skewed to low complexity. The segment covering 475–484 (AKTTLKSTTL) has biased composition (polar residues).

Belongs to the protein kinase superfamily. CAMK Ser/Thr protein kinase family. CaMK subfamily. In terms of assembly, homodimer. Autophosphorylated. As to expression, highly expressed in testis, particularly in cells from the spermatogenic epithelia. Present in meiotic and post meiotic sperm cells. Significant expression is detected in lung epithelia, alveolar macrophages, horizontal cells in the retina and in embryonic organs such as heart, brain and spinal cord. Also expressed in pituitary gland, kidney, pancreas, trachea and thyroid gland.

It is found in the cytoplasm. The protein localises to the cytoskeleton. The protein resides in the perinuclear region. It carries out the reaction L-seryl-[protein] + ATP = O-phospho-L-seryl-[protein] + ADP + H(+). The catalysed reaction is L-threonyl-[protein] + ATP = O-phospho-L-threonyl-[protein] + ADP + H(+). With respect to regulation, specifically inhibited by CDD-2807 ((3-([1,1'-Biphenyl]-2-ylethynyl)-1H-indazol-5-yl)(2,6-diazaspiro[3.5]nonan-2-yl)methanone). CDD-2807 is a potential male contraceptive drug: it is not toxic, efficiently crosses the blood-testis barrier and induces a reversible contraceptive effect in male mice. Serine/threonine protein kinase required for spermatid differentiation and male fertility. Promotes sperm flagella assembly during spermatogenesis by mediating phosphorylation of fibrous sheath proteins AKAP3 and AKAP4. Also phosphorylates vimentin/VIM, thereby regulating the dynamic behavior of the intermediate filament cytoskeleton. The chain is Serine/threonine-protein kinase 33 from Mus musculus (Mouse).